A 66-amino-acid polypeptide reads, in one-letter code: Alpha-like toxin BmK-M7 (66 aa).

Residues 2–64 (RDGYIALPHN…VPIRVPGRCH (63 aa)) enclose the LCN-type CS-alpha/beta domain. Intrachain disulfides connect Cys12–Cys63, Cys16–Cys36, Cys22–Cys46, and Cys26–Cys48.

The protein belongs to the long (4 C-C) scorpion toxin superfamily. Sodium channel inhibitor family. Alpha subfamily. In terms of tissue distribution, expressed by the venom gland.

The protein resides in the secreted. Functionally, alpha toxins bind voltage-independently at site-3 of sodium channels (Nav) and inhibit the inactivation of the activated channels, thereby blocking neuronal transmission. This toxin is active on both mammals and insects. It can be considered as a cardiotoxin, as it can bind to human cardiac sodium channel and modify its normal properties. This Olivierus martensii (Manchurian scorpion) protein is Alpha-like toxin BmK-M7.